Reading from the N-terminus, the 69-residue chain is Ferredoxin-1 (69 aa).

Positions 12, 18, and 57 each coordinate [3Fe-4S] cluster.

[3Fe-4S] cluster is required as a cofactor.

In terms of biological role, electron transport protein for the cytochrome P-450-SU1 system. The polypeptide is Ferredoxin-1 (suaB) (Streptomyces griseolus).